The primary structure comprises 365 residues: MRFSRVVSLVLLLVFTAVLTGAVKASLNDKPVGFASVPTADLPEGTVGGLGGEIVFVRTAEELEKYTTAEGKYVIVVDGTIVFEPKREIKVLSDKTIVGINDAKIVGGGLVIKDAQNVIIRNIHFEGFYMEDDPQGKKYDFDYINAENSHHIWIDHCTFVNGNDGAVDIKKYSNYITVSWCKFVDHDKVSLVGSSDKEDPEQAGQAYKVTYHHNYFKNCIQRMPRIRFGMAHVFNNFYSMGLRTGVSGNVFPIYGVASAMGAKVHVEGNYFMGYGAVMAEAGIAFLPTRIMGPVEGYLTLGEGDAKNKFYYCKEPETRPVEEGKPAFDPHEYYDYTLDPVDDVPKIVVDGAGAGKLVFEDLMSSK.

The first 25 residues, 1–25 (MRFSRVVSLVLLLVFTAVLTGAVKA), serve as a signal peptide directing secretion. 3 residues coordinate Ca(2+): aspartate 142, aspartate 164, and aspartate 168. One copy of the PbH1 1 repeat lies at 149-171 (SHHIWIDHCTFVNGNDGAVDIKK). Residue arginine 222 is part of the active site. A PbH1 2 repeat occupies 261 to 287 (GAKVHVEGNYFMGYGAVMAEAGIAFLP).

This sequence belongs to the polysaccharide lyase 1 family. As to quaternary structure, homotetramer. Requires Ca(2+) as cofactor.

Its subcellular location is the secreted. It catalyses the reaction eliminative cleavage of unsaturated trigalacturonate as the major product from the reducing end of polygalacturonic acid/pectate.. Functionally, cleaves unsaturated trigalacturonate from pectin. Activity is highest towards polygalacturonic acid, activity on methylated pectins decreases with an increasing degree of methylation. The protein is Pectate trisaccharide-lyase of Thermotoga sp. (strain RQ2).